A 197-amino-acid polypeptide reads, in one-letter code: Phosphoheptose isomerase (197 aa).

One can recognise an SIS domain in the interval 34-196 (MVQCLLGGNK…DRTLFPQDEQ (163 aa)). Residue 49–51 (NGG) coordinates substrate. Positions 58 and 62 each coordinate Zn(2+). Residues Glu-62, 91–92 (ND), 117–119 (STS), Ser-122, and Gln-172 contribute to the substrate site. Residues Gln-172 and His-180 each contribute to the Zn(2+) site.

This sequence belongs to the SIS family. GmhA subfamily. As to quaternary structure, homotetramer. Zn(2+) is required as a cofactor.

The protein localises to the cytoplasm. The catalysed reaction is 2 D-sedoheptulose 7-phosphate = D-glycero-alpha-D-manno-heptose 7-phosphate + D-glycero-beta-D-manno-heptose 7-phosphate. The protein operates within carbohydrate biosynthesis; D-glycero-D-manno-heptose 7-phosphate biosynthesis; D-glycero-alpha-D-manno-heptose 7-phosphate and D-glycero-beta-D-manno-heptose 7-phosphate from sedoheptulose 7-phosphate: step 1/1. Catalyzes the isomerization of sedoheptulose 7-phosphate in D-glycero-D-manno-heptose 7-phosphate. The polypeptide is Phosphoheptose isomerase (Shewanella oneidensis (strain ATCC 700550 / JCM 31522 / CIP 106686 / LMG 19005 / NCIMB 14063 / MR-1)).